Consider the following 616-residue polypeptide: MDRAVSQVALENDEREAKNTWRLVFRIAILLLTVVTLAISAAALAYSMEASTPSDLVGIPTAISRTEEKITSALGSNQDVVDRIYKQVALESPLALLNTESTIMNAITSLSYQINGAANSSGCGAPIHDPDYIGGIGKELIVDDASDVTSFYPSAFQEHLNFIPAPTTGSGCTRIPSFDMSATHYCYTHNVILSGCRDRSHSHQYLALGVLRTSATGRVFFSTLRSINLDDTQNRKSCSVSATPLGCDMLCSKVTETEEEDYNSAIPTSMVHGRLGFDGQYHEKDLDVTTLFEDWVANYPGVGGGSFIDNRVWFPVYGGLKPNSPSDTAQEGKYVIYKRYNDTCPDEQDYQIRMAKSSYKPGRFGGKRVQQAILSIKVSTSLGEDPVLTVPPNTVTLMGAEGRVLTVGTSHFFYQRGSSYFSPALLYPMTVSNKTATLHSPYTFNAFTRPGSVPCQASARCPNSCVTGVYTDPYPLVFYRNHTLRGVFGTMLDDEQARLNPVSAVFDSISRSRITRVSSSSTKAAYTTSTCFKVVKTNKTYCLSIAEISNTLFGEFRIVPLLVEILKDDGVREARSGRLSQLQEGWKDDIVSPIFCDAKNQTEYRRELESYAASWP.

Residues 1 to 26 (MDRAVSQVALENDEREAKNTWRLVFR) lie on the Intravirion side of the membrane. The chain crosses the membrane as a helical span at residues 27–47 (IAILLLTVVTLAISAAALAYS). At 48–616 (MEASTPSDLV…ELESYAASWP (569 aa)) the chain is on the virion surface side. Residue Asn-119 is glycosylated (N-linked (GlcNAc...) asparagine; by host). Positions 124-152 (GAPIHDPDYIGGIGKELIVDDASDVTSFY) are important for interaction with fusion/F protein. Disulfide bonds link Cys-172–Cys-196, Cys-186–Cys-247, and Cys-238–Cys-251. An involved in neuraminidase activity region spans residues 234–239 (NRKSCS). 2 N-linked (GlcNAc...) asparagine; by host glycosylation sites follow: Asn-341 and Asn-433. Cystine bridges form between Cys-344–Cys-461 and Cys-455–Cys-465. N-linked (GlcNAc...) asparagine; by host glycosylation is found at Asn-481, Asn-538, and Asn-600. A disulfide bridge connects residues Cys-531 and Cys-542.

The protein belongs to the paramyxoviruses hemagglutinin-neuraminidase family. Homotetramer; composed of disulfide-linked homodimers. Interacts with F protein trimer. Interacts with host CG-1B; this interaction inhibits viral adsorption and replication rather than internalization.

The protein localises to the virion membrane. The protein resides in the host cell membrane. The enzyme catalyses Hydrolysis of alpha-(2-&gt;3)-, alpha-(2-&gt;6)-, alpha-(2-&gt;8)- glycosidic linkages of terminal sialic acid residues in oligosaccharides, glycoproteins, glycolipids, colominic acid and synthetic substrates.. Functionally, mediates the viral entry into the host cell together with fusion/F protein. Attaches the virus to sialic acid-containing cell receptors and thereby initiates infection. Binding of HN protein to the receptor induces a conformational change that allows the F protein to trigger virion/cell membranes fusion. Its function is as follows. Neuraminidase activity ensures the efficient spread of the virus by dissociating the mature virions from the neuraminic acid containing glycoproteins. The chain is Hemagglutinin-neuraminidase (HN) from Gallus gallus (Chicken).